Reading from the N-terminus, the 277-residue chain is S-formylglutathione hydrolase FrmB (277 aa).

Active-site charge relay system residues include S145, D221, and H254.

Belongs to the esterase D family.

The enzyme catalyses S-formylglutathione + H2O = formate + glutathione + H(+). Serine hydrolase involved in the detoxification of formaldehyde. Hydrolyzes S-formylglutathione to glutathione and formate. The sequence is that of S-formylglutathione hydrolase FrmB (frmB) from Escherichia coli (strain ATCC 8739 / DSM 1576 / NBRC 3972 / NCIMB 8545 / WDCM 00012 / Crooks).